The following is a 781-amino-acid chain: Molybdenum cofactor sulfurase (781 aa).

Position 246 is an N6-(pyridoxal phosphate)lysine (K246). Residue C413 is part of the active site. The MOSC domain occupies 635–781 (LRLLRQSGQR…MTCGDVVLVE (147 aa)). Residue S734 is modified to Phosphoserine.

Belongs to the class-V pyridoxal-phosphate-dependent aminotransferase family. MOCOS subfamily. Requires pyridoxal 5'-phosphate as cofactor.

The catalysed reaction is Mo-molybdopterin + L-cysteine + AH2 = thio-Mo-molybdopterin + L-alanine + A + H2O. The protein operates within cofactor biosynthesis; molybdopterin biosynthesis. In terms of biological role, sulfurates the molybdenum cofactor. Sulfation of molybdenum is essential for xanthine dehydrogenase (XDH) and aldehyde oxidase (ADO) enzymes in which molybdenum cofactor is liganded by 1 oxygen and 1 sulfur atom in active form. The chain is Molybdenum cofactor sulfurase from Drosophila melanogaster (Fruit fly).